Reading from the N-terminus, the 473-residue chain is Uronate isomerase (473 aa).

It belongs to the metallo-dependent hydrolases superfamily. Uronate isomerase family.

It catalyses the reaction D-glucuronate = D-fructuronate. The catalysed reaction is aldehydo-D-galacturonate = keto-D-tagaturonate. It functions in the pathway carbohydrate metabolism; pentose and glucuronate interconversion. This chain is Uronate isomerase (uxaC), found in Geobacillus stearothermophilus (Bacillus stearothermophilus).